Reading from the N-terminus, the 430-residue chain is Dihydroorotase (430 aa).

Zn(2+) is bound by residues H60 and H62. Residues 62 to 64 (HFR) and N94 each bind substrate. Residues D151, H178, and H231 each coordinate Zn(2+). N277 is a substrate binding site. Position 304 (D304) interacts with Zn(2+). The active site involves D304. Residues H308 and 322–323 (FG) contribute to the substrate site.

It belongs to the metallo-dependent hydrolases superfamily. DHOase family. Class I DHOase subfamily. Requires Zn(2+) as cofactor.

The catalysed reaction is (S)-dihydroorotate + H2O = N-carbamoyl-L-aspartate + H(+). Its pathway is pyrimidine metabolism; UMP biosynthesis via de novo pathway; (S)-dihydroorotate from bicarbonate: step 3/3. Its function is as follows. Catalyzes the reversible cyclization of carbamoyl aspartate to dihydroorotate. The chain is Dihydroorotase from Carboxydothermus hydrogenoformans (strain ATCC BAA-161 / DSM 6008 / Z-2901).